The chain runs to 86 residues: YcgL domain-containing protein XAC4085 (86 aa).

The YcgL domain occupies 1–83; the sequence is MHAYVYKSQR…PKTIVLAGEC (83 aa).

The protein is YcgL domain-containing protein XAC4085 of Xanthomonas axonopodis pv. citri (strain 306).